The sequence spans 515 residues: N-fatty-acyl-amino acid synthase/hydrolase PM20D1.1 (515 aa).

Residues 1–34 (MKTKFTKKTVLKFFGILFAILLLSVLILFSVVIG) form the signal peptide. Asn-50, Asn-87, and Asn-118 each carry an N-linked (GlcNAc...) asparagine glycan. His-140 contributes to the Zn(2+) binding site. Asp-142 is an active-site residue. Residue Asp-173 participates in Zn(2+) binding. Glu-207 functions as the Proton acceptor in the catalytic mechanism. Zn(2+)-binding residues include Glu-208, Asp-234, and His-480.

Belongs to the peptidase M20A family. Requires Zn(2+) as cofactor.

It localises to the secreted. It carries out the reaction an N-acyl-L-amino acid + H2O = an L-alpha-amino acid + a carboxylate. It catalyses the reaction an N-acyl-aromatic L-alpha-amino acid + H2O = an aromatic L-alpha-amino acid + a carboxylate. The catalysed reaction is N-(5Z,8Z,11Z,14Z)-eicosatetraenoyl-glycine + H2O = (5Z,8Z,11Z,14Z)-eicosatetraenoate + glycine. The enzyme catalyses N-hexadecanoyl-L-phenylalanine + H2O = hexadecanoate + L-phenylalanine. It carries out the reaction N-octadecanoyl-L-phenylalanine + H2O = octadecanoate + L-phenylalanine. It catalyses the reaction N-(4Z,7Z,10Z,13Z,16Z,19Z-docosahexaenoyl)-L-phenylalanine + H2O = (4Z,7Z,10Z,13Z,16Z,19Z)-docosahexaenoate + L-phenylalanine. The catalysed reaction is N-(9Z-octadecenoyl)-L-asparagine + H2O = L-asparagine + (9Z)-octadecenoate. The enzyme catalyses (9Z)-octadecenoate + glycine = N-(9Z-octadecenoyl)glycine + H2O. It carries out the reaction N-(9Z-octadecenoyl)-L-lysine + H2O = L-lysine + (9Z)-octadecenoate. It catalyses the reaction N-(9Z-octadecenoyl)-L-methionine + H2O = (9Z)-octadecenoate + L-methionine. The catalysed reaction is N-(9Z-octadecenoyl)-L-serine + H2O = L-serine + (9Z)-octadecenoate. The enzyme catalyses N-(9Z-octadecenoyl)-L-tryptophan + H2O = L-tryptophan + (9Z)-octadecenoate. It carries out the reaction N-(9Z-octadecenoyl)-L-tyrosine + H2O = L-tyrosine + (9Z)-octadecenoate. It catalyses the reaction N-(9Z-octadecenoyl)-L-glutamine + H2O = L-glutamine + (9Z)-octadecenoate. The catalysed reaction is N-(5Z,8Z,11Z,14Z-eicosatetraenoyl)-L-serine + H2O = (5Z,8Z,11Z,14Z)-eicosatetraenoate + L-serine. The enzyme catalyses (5Z,8Z,11Z,14Z)-eicosatetraenoate + L-phenylalanine = N-(5Z,8Z,11Z,14Z-eicosatetraenoyl)-L-phenylalanine + H2O. It carries out the reaction N-(9Z-octadecenoyl)-L-leucine + H2O = L-leucine + (9Z)-octadecenoate. It catalyses the reaction L-phenylalanine + (9Z)-octadecenoate = N-(9Z-octadecenoyl)-L-phenylalanine + H2O. The protein operates within amino-acid metabolism. It participates in energy metabolism; electron transfer. It functions in the pathway lipid metabolism; fatty acid metabolism. Lipoproteins are powerful coactivators of PM20D1 activity in vitro and NAA biosynthesis in vivo. Functionally, secreted enzyme that regulates the endogenous N-fatty acyl amino acid (NAAs) tissue and circulating levels by functioning as a bidirectional NAA synthase/hydrolase. It condenses free fatty acids and free amino acids to generate NAAs and bidirectionally catalyzes the reverse hydrolysis reaction. Some of these NAAs stimulate oxidative metabolism via mitochondrial uncoupling, increasing energy expenditure in a UPC1-independent manner. Thereby, this secreted protein may indirectly regulate whole body energy expenditure. PM20D1 circulates in tight association with both low- and high-density (LDL and HDL,respectively) lipoprotein particles. This Danio rerio (Zebrafish) protein is N-fatty-acyl-amino acid synthase/hydrolase PM20D1.1.